Here is a 315-residue protein sequence, read N- to C-terminus: Aspartate carbamoyltransferase catalytic subunit (315 aa).

Residues R65 and T66 each contribute to the carbamoyl phosphate site. Residue K93 participates in L-aspartate binding. Residues R115, H145, and Q148 each coordinate carbamoyl phosphate. 2 residues coordinate L-aspartate: R179 and R234. Carbamoyl phosphate is bound by residues G275 and P276.

This sequence belongs to the aspartate/ornithine carbamoyltransferase superfamily. ATCase family. In terms of assembly, heterododecamer (2C3:3R2) of six catalytic PyrB chains organized as two trimers (C3), and six regulatory PyrI chains organized as three dimers (R2).

The enzyme catalyses carbamoyl phosphate + L-aspartate = N-carbamoyl-L-aspartate + phosphate + H(+). It participates in pyrimidine metabolism; UMP biosynthesis via de novo pathway; (S)-dihydroorotate from bicarbonate: step 2/3. In terms of biological role, catalyzes the condensation of carbamoyl phosphate and aspartate to form carbamoyl aspartate and inorganic phosphate, the committed step in the de novo pyrimidine nucleotide biosynthesis pathway. This Xanthomonas oryzae pv. oryzae (strain MAFF 311018) protein is Aspartate carbamoyltransferase catalytic subunit.